Consider the following 297-residue polypeptide: 4-hydroxy-tetrahydrodipicolinate synthase (297 aa).

A pyruvate-binding site is contributed by Thr46. Tyr134 functions as the Proton donor/acceptor in the catalytic mechanism. Lys163 acts as the Schiff-base intermediate with substrate in catalysis. Ile205 is a binding site for pyruvate.

It belongs to the DapA family. In terms of assembly, homotetramer; dimer of dimers.

The protein resides in the cytoplasm. The catalysed reaction is L-aspartate 4-semialdehyde + pyruvate = (2S,4S)-4-hydroxy-2,3,4,5-tetrahydrodipicolinate + H2O + H(+). Its pathway is amino-acid biosynthesis; L-lysine biosynthesis via DAP pathway; (S)-tetrahydrodipicolinate from L-aspartate: step 3/4. Its function is as follows. Catalyzes the condensation of (S)-aspartate-beta-semialdehyde [(S)-ASA] and pyruvate to 4-hydroxy-tetrahydrodipicolinate (HTPA). The sequence is that of 4-hydroxy-tetrahydrodipicolinate synthase from Thermoanaerobacter pseudethanolicus (strain ATCC 33223 / 39E) (Clostridium thermohydrosulfuricum).